The primary structure comprises 163 residues: Nucleotide-binding protein YajQ (163 aa).

The protein belongs to the YajQ family.

Nucleotide-binding protein. In Salmonella paratyphi A (strain ATCC 9150 / SARB42), this protein is Nucleotide-binding protein YajQ.